The sequence spans 355 residues: UDP-N-acetylglucosamine--N-acetylmuramyl-(pentapeptide) pyrophosphoryl-undecaprenol N-acetylglucosamine transferase (355 aa).

UDP-N-acetyl-alpha-D-glucosamine-binding positions include 15–17 (TGG), asparagine 127, arginine 163, serine 191, isoleucine 244, 263–268 (ALTVSE), and glutamine 288.

The protein belongs to the glycosyltransferase 28 family. MurG subfamily.

The protein localises to the cell inner membrane. The enzyme catalyses di-trans,octa-cis-undecaprenyl diphospho-N-acetyl-alpha-D-muramoyl-L-alanyl-D-glutamyl-meso-2,6-diaminopimeloyl-D-alanyl-D-alanine + UDP-N-acetyl-alpha-D-glucosamine = di-trans,octa-cis-undecaprenyl diphospho-[N-acetyl-alpha-D-glucosaminyl-(1-&gt;4)]-N-acetyl-alpha-D-muramoyl-L-alanyl-D-glutamyl-meso-2,6-diaminopimeloyl-D-alanyl-D-alanine + UDP + H(+). The protein operates within cell wall biogenesis; peptidoglycan biosynthesis. Functionally, cell wall formation. Catalyzes the transfer of a GlcNAc subunit on undecaprenyl-pyrophosphoryl-MurNAc-pentapeptide (lipid intermediate I) to form undecaprenyl-pyrophosphoryl-MurNAc-(pentapeptide)GlcNAc (lipid intermediate II). This is UDP-N-acetylglucosamine--N-acetylmuramyl-(pentapeptide) pyrophosphoryl-undecaprenol N-acetylglucosamine transferase from Salmonella arizonae (strain ATCC BAA-731 / CDC346-86 / RSK2980).